The sequence spans 346 residues: Flap endonuclease 1 (346 aa).

The segment at 1–102 (MGVTELGKLI…AEIEERRKVK (102 aa)) is N-domain. Positions 31, 84, 156, 158, 177, 179, and 239 each coordinate Mg(2+). Residues 120-261 (DVAKYMKRAV…KALKLVWEFG (142 aa)) are I-domain.

This sequence belongs to the XPG/RAD2 endonuclease family. FEN1 subfamily. As to quaternary structure, interacts with PCNA. PCNA stimulates the nuclease activity without altering cleavage specificity. Mg(2+) serves as cofactor.

Its function is as follows. Structure-specific nuclease with 5'-flap endonuclease and 5'-3' exonuclease activities involved in DNA replication and repair. During DNA replication, cleaves the 5'-overhanging flap structure that is generated by displacement synthesis when DNA polymerase encounters the 5'-end of a downstream Okazaki fragment. Binds the unpaired 3'-DNA end and kinks the DNA to facilitate 5' cleavage specificity. Cleaves one nucleotide into the double-stranded DNA from the junction in flap DNA, leaving a nick for ligation. Also involved in the base excision repair (BER) pathway. Acts as a genome stabilization factor that prevents flaps from equilibrating into structures that lead to duplications and deletions. Also possesses 5'-3' exonuclease activity on nicked or gapped double-stranded DNA. The sequence is that of Flap endonuclease 1 from Pyrobaculum islandicum (strain DSM 4184 / JCM 9189 / GEO3).